Here is a 50-residue protein sequence, read N- to C-terminus: Defensin D2 (50 aa).

4 disulfide bridges follow: Cys3-Cys50, Cys14-Cys35, Cys20-Cys44, and Cys24-Cys46.

Contains 4 disulfide bonds.

Its subcellular location is the secreted. Antimicrobial peptide active against fungi, Gram-positive and Gram-negative bacteria. Inhibits growth of hyphae in the fungi A.niger (IC(50)=3.5 ug/ml), B.sorokiniana (IC(50)=1.8 ug/ml), F.oxysporum (IC(50)=5.3 ug/ml), F.graminearum (IC(50)=6.9 ug/ml), F.culmorum (IC(50)=6.9 ug/ml) and B.cinerea (IC(50)=13.7 ug/ml). Has no effect on spore germination. Destroys spores in germinated conidia by disruption of cell walls and membranes in A.niger and B.sorokiniana. Causes vacuolization of germinated macro- and microconidia in F.oxysporum, F.graminearum and F.culmorum. Strongly inhibits growth of P.infestans on potato tubers above concentrations of 3.4 ug/ml. Inhibits growth of Gram-positive bacteria C.michiganensis and B.subtilis and of Gram-negative bacteria P.syringae, E.carotovora and E.coli. This Nigella sativa (Black cumin) protein is Defensin D2.